A 224-amino-acid chain; its full sequence is Phosphoribosylformylglycinamidine synthase subunit PurQ (224 aa).

In terms of domain architecture, Glutamine amidotransferase type-1 spans 1-224; the sequence is MIAIIKFPGT…ILLRRLGEWA (224 aa). Cysteine 84 functions as the Nucleophile in the catalytic mechanism. Active-site residues include histidine 196 and glutamate 198.

In terms of assembly, part of the FGAM synthase complex composed of 1 PurL, 1 PurQ and 2 PurS subunits.

The protein resides in the cytoplasm. The enzyme catalyses N(2)-formyl-N(1)-(5-phospho-beta-D-ribosyl)glycinamide + L-glutamine + ATP + H2O = 2-formamido-N(1)-(5-O-phospho-beta-D-ribosyl)acetamidine + L-glutamate + ADP + phosphate + H(+). It carries out the reaction L-glutamine + H2O = L-glutamate + NH4(+). The protein operates within purine metabolism; IMP biosynthesis via de novo pathway; 5-amino-1-(5-phospho-D-ribosyl)imidazole from N(2)-formyl-N(1)-(5-phospho-D-ribosyl)glycinamide: step 1/2. In terms of biological role, part of the phosphoribosylformylglycinamidine synthase complex involved in the purines biosynthetic pathway. Catalyzes the ATP-dependent conversion of formylglycinamide ribonucleotide (FGAR) and glutamine to yield formylglycinamidine ribonucleotide (FGAM) and glutamate. The FGAM synthase complex is composed of three subunits. PurQ produces an ammonia molecule by converting glutamine to glutamate. PurL transfers the ammonia molecule to FGAR to form FGAM in an ATP-dependent manner. PurS interacts with PurQ and PurL and is thought to assist in the transfer of the ammonia molecule from PurQ to PurL. The chain is Phosphoribosylformylglycinamidine synthase subunit PurQ from Saccharolobus solfataricus (strain ATCC 35092 / DSM 1617 / JCM 11322 / P2) (Sulfolobus solfataricus).